Reading from the N-terminus, the 328-residue chain is Phosphate acyltransferase (328 aa).

Belongs to the PlsX family. As to quaternary structure, homodimer. Probably interacts with PlsY.

The protein localises to the cytoplasm. The enzyme catalyses a fatty acyl-[ACP] + phosphate = an acyl phosphate + holo-[ACP]. It participates in lipid metabolism; phospholipid metabolism. In terms of biological role, catalyzes the reversible formation of acyl-phosphate (acyl-PO(4)) from acyl-[acyl-carrier-protein] (acyl-ACP). This enzyme utilizes acyl-ACP as fatty acyl donor, but not acyl-CoA. This Pseudothermotoga lettingae (strain ATCC BAA-301 / DSM 14385 / NBRC 107922 / TMO) (Thermotoga lettingae) protein is Phosphate acyltransferase.